The chain runs to 368 residues: G kinase-anchoring protein 1 (368 aa).

Disordered stretches follow at residues 18 to 127 (LQVD…WKQR), 152 to 260 (EEHK…VRTE), and 333 to 368 (LHTA…EGDV). Positions 33-56 (PKAAGRGAGKPRSGKSPSGKNSQN) are enriched in low complexity. Residues 52-82 (KNSQNNEKKKEKRRRKKEQQQSEANELRSLA) adopt a coiled-coil conformation. Polar residues-rich tracts occupy residues 88–100 (QKST…TLQD) and 109–121 (ANVQ…QENW). Basic and acidic residues predominate over residues 152–162 (EEHKKDADKAE). Positions 170 to 180 (TGGKKDRKKNQ) are enriched in basic residues. Over residues 194 to 238 (FQQEDQLKNKPEREPVNPALRDDKFFNKLEDDVSKIVQRDKRREQ) the composition is skewed to basic and acidic residues. The span at 239–250 (YSNSAGQEVNTS) shows a compositional bias: polar residues. Residues 251-260 (SEHEQDVRTE) show a composition bias toward basic and acidic residues. The stretch at 256-350 (DVRTEQLKYE…RSKVKGLQSE (95 aa)) forms a coiled coil.

This sequence belongs to the GKAP1 family.

Its subcellular location is the golgi apparatus. Functionally, may play a role in the regulation of insulin-dependent IRS1 tyrosine phosphorylation in adipocytes. The polypeptide is G kinase-anchoring protein 1 (gkap1) (Danio rerio (Zebrafish)).